The sequence spans 159 residues: Photosystem I reaction center subunit XI (159 aa).

The next 3 membrane-spanning stretches (helical) occupy residues 53-73, 84-104, and 125-145; these read LEIGMAHGYFLIGPWVKLGPL, LISGIALILIATACLAAYGIV, and FTAGFFVGATGGAFVAFTLLE.

It belongs to the PsaL family.

The protein resides in the cellular thylakoid membrane. The polypeptide is Photosystem I reaction center subunit XI (Cyanothece sp. (strain PCC 7425 / ATCC 29141)).